We begin with the raw amino-acid sequence, 247 residues long: MVTHLEVCIDNIESLHYAIAGGATRIELCSSLALGGLTPSYGFMQQAAKQSSVPVYAMIRPRQGDFFYNEEELDMMRWDIEAAHQSGLDGVVLGVLTQEGDIHIPFATALCEFAQALGLGITFHRAFDQCRNAEQALEDIIHLGCERILTSGLAPSAPAGESVLKSLVEQAQGRIAIMAGAGVNADNARDLVKNTNVQEVHLSGKTTRPSQMTFIAGQSKMGASDVDDFAIPITSTQAIANVAAALK.

Belongs to the CutC family.

Its subcellular location is the cytoplasm. In Vibrio parahaemolyticus serotype O3:K6 (strain RIMD 2210633), this protein is PF03932 family protein CutC.